The following is a 1024-amino-acid chain: E3 ISG15--protein ligase HERC5 (1024 aa).

The span at 1 to 13 shows a compositional bias: basic residues; that stretch reads MERRSRRKSRRNG. The segment at 1–28 is disordered; it reads MERRSRRKSRRNGRSTAGKAAATQPAKS. 5 RCC1 repeats span residues 96–155, 156–208, 209–260, 262–312, and 314–364; these read NMKI…ALSK, GGEL…ALSM, SGNI…LLTQ, GLLF…AYVS, and LGKV…LIMI. The 323-residue stretch at 702 to 1024 folds into the HECT domain; it reads ENEDLRKELW…EAINNNRGFG (323 aa). C994 (glycyl thioester intermediate) is an active-site residue.

In terms of assembly, (Microbial infection) Interacts with human cytomegalovirus protein UL26; this interaction inhibits global protein ISGylation. (Microbial infection) Interacts with Kaposi's sarcoma-associated herpesvirus protein v-IRF1; this interaction inhibits global protein ISGylation. As to quaternary structure, binds to CCNA1, CCNB1, CCND1 and CCNE1. Interacts with UBE2L6. Interacts with IRF3, this interaction is marginal in resting cells but enhanced upon viral infection. Interacts with influenza A virus NS1. ISGylated. As to expression, expressed in testis and to a lesser degree in brain, ovary and placenta. Found in most tissues at low levels.

It localises to the cytoplasm. The protein resides in the perinuclear region. Its function is as follows. Major E3 ligase for ISG15 conjugation. Acts as a positive regulator of innate antiviral response in cells induced by interferon. Functions as part of the ISGylation machinery that recognizes target proteins in a broad and relatively non-specific manner. Catalyzes ISGylation of IRF3 which results in sustained activation, it attenuates IRF3-PIN1 interaction, which antagonizes IRF3 ubiquitination and degradation, and boosts the antiviral response. Mediates ISGylation of the phosphatase PTEN leading to its degradation, thus alleviating its suppression of the PI3K-AKT signaling pathway and promoting the production of cytokines that facilitate bacterial clearance. Interferes with the function of key viral structural proteins such as ebolavirus structural protein VP40 or HIV-1 protein GAG. Catalyzes ISGylation of influenza A viral NS1 which attenuates virulence; ISGylated NS1 fails to form homodimers and thus to interact with its RNA targets. Catalyzes ISGylation of papillomavirus type 16 L1 protein which results in dominant-negative effect on virus infectivity. Physically associated with polyribosomes, broadly modifies newly synthesized proteins in a cotranslational manner. In an interferon-stimulated cell, newly translated viral proteins are primary targets of ISG15. Promotes parkin/PRKN ubiquitin E3 ligase activity by suppressing the intramolecular interaction that maintains its autoinhibited conformation. Functionally, (Microbial infection) Functions as an E3 ligase for ISGylation of hepatitis B virus protein X leading to enhanced viral replication due to increased interferon resistance. The sequence is that of E3 ISG15--protein ligase HERC5 (HERC5) from Homo sapiens (Human).